Here is a 115-residue protein sequence, read N- to C-terminus: Large ribosomal subunit protein bL19 (115 aa).

It belongs to the bacterial ribosomal protein bL19 family.

This protein is located at the 30S-50S ribosomal subunit interface and may play a role in the structure and function of the aminoacyl-tRNA binding site. In Caldanaerobacter subterraneus subsp. tengcongensis (strain DSM 15242 / JCM 11007 / NBRC 100824 / MB4) (Thermoanaerobacter tengcongensis), this protein is Large ribosomal subunit protein bL19.